Consider the following 436-residue polypeptide: uncharacterized protein (436 aa).

12 helical membrane passes run 38–58 (ILIF…TVGA), 70–90 (VAGI…LLIG), 102–122 (LAGG…AALI), 125–145 (VALL…NLQV), 160–180 (TAAS…PNLV), 197–217 (GPFI…LIFL), 254–274 (IMVG…IMTM), 291–311 (LVIG…GLLV), 319–339 (MAIA…IAPA), 342–362 (LSLL…GLLT), 383–403 (FDVL…MVVA), and 409–429 (ILSI…IWYF).

The protein belongs to the major facilitator superfamily.

The protein resides in the cell membrane. This is an uncharacterized protein from Bacillus subtilis (strain 168).